The primary structure comprises 87 residues: Large ribosomal subunit protein bL27 (87 aa).

Belongs to the bacterial ribosomal protein bL27 family.

This is Large ribosomal subunit protein bL27 from Stenotrophomonas maltophilia (strain R551-3).